The chain runs to 364 residues: UDP-N-acetylglucosamine--N-acetylmuramyl-(pentapeptide) pyrophosphoryl-undecaprenol N-acetylglucosamine transferase (364 aa).

UDP-N-acetyl-alpha-D-glucosamine contacts are provided by residues 16-18 (TGG), N128, R166, S195, I249, and Q294.

This sequence belongs to the glycosyltransferase 28 family. MurG subfamily.

It localises to the cell inner membrane. It carries out the reaction di-trans,octa-cis-undecaprenyl diphospho-N-acetyl-alpha-D-muramoyl-L-alanyl-D-glutamyl-meso-2,6-diaminopimeloyl-D-alanyl-D-alanine + UDP-N-acetyl-alpha-D-glucosamine = di-trans,octa-cis-undecaprenyl diphospho-[N-acetyl-alpha-D-glucosaminyl-(1-&gt;4)]-N-acetyl-alpha-D-muramoyl-L-alanyl-D-glutamyl-meso-2,6-diaminopimeloyl-D-alanyl-D-alanine + UDP + H(+). Its pathway is cell wall biogenesis; peptidoglycan biosynthesis. Its function is as follows. Cell wall formation. Catalyzes the transfer of a GlcNAc subunit on undecaprenyl-pyrophosphoryl-MurNAc-pentapeptide (lipid intermediate I) to form undecaprenyl-pyrophosphoryl-MurNAc-(pentapeptide)GlcNAc (lipid intermediate II). The protein is UDP-N-acetylglucosamine--N-acetylmuramyl-(pentapeptide) pyrophosphoryl-undecaprenol N-acetylglucosamine transferase of Chromohalobacter salexigens (strain ATCC BAA-138 / DSM 3043 / CIP 106854 / NCIMB 13768 / 1H11).